Consider the following 42-residue polypeptide: Photosystem I reaction center subunit IX (42 aa).

Residues Y7–I27 form a helical membrane-spanning segment.

It belongs to the PsaJ family.

The protein resides in the plastid. It localises to the chloroplast thylakoid membrane. Its function is as follows. May help in the organization of the PsaE and PsaF subunits. This chain is Photosystem I reaction center subunit IX, found in Nephroselmis olivacea (Green alga).